A 683-amino-acid polypeptide reads, in one-letter code: MRGCLQLARWLSAAPKGTAASLTRAPFVLANAPRFFTSSASHAGSRSTATKPVSDLENRIAAIPIERYRNFCIVAHVDHGKSTLSDRLLELTGTIEPGSNKQVLDKLDVERERGITVKAQTCSMIYNHNGEDYLLHLVDTPGHVDFRAEVSRSYASCGGALLLVDASQGIQAQTVANFYLAFAQGLELIPVINKVDLPSAEPERALEQMKNSFELDTENAVMVSAKTGLNVEKLLPTVIEKIPAYGYFPVYLHKLFPLLTLTSPIGDCKKPLRMLLVDSWYDSYKGVICLVRIFDGEIRAGQQVVSFATGLKYYVGEVGIMYPNETPQSVLRAGQVGYIYFNPGMKRSKEAKIGDTFTRVGFEKAVEPLPGFEEPKSMVFVAAYPVDADHFEHLEDSINQLVLNDRSITVQKESSEALGAGFRLGFLGTLHCSVFEDRLRQEHGASIIITPPSVPVKIIWKDGKEEIITSPAKFPEDEELRSKVAEIQEPYVLATLTFPEEYLGKVIELCEANRGEQKSLEYFTATQVILKYELPLAQLVDDFFGKLKGSTKGYASLDYEESAWQTGNIVKLQLLVNKAPVDAVARIVHLSQVERLGRQWVTKFKEHVDRQLFEVVIQAAVGKKIIARETVKPYRKDVLAKLHASDVSRRRKLLEKQKEGRKRLRAVGNVVIEHKAFQAFLAK.

Residues 1-43 constitute a mitochondrion transit peptide; that stretch reads MRGCLQLARWLSAAPKGTAASLTRAPFVLANAPRFFTSSASHA. The region spanning 66 to 250 is the tr-type G domain; sequence ERYRNFCIVA…KIPAYGYFPV (185 aa). Residues 75–82, 139–143, and 193–196 contribute to the GTP site; these read AHVDHGKS, DTPGH, and NKVD.

This sequence belongs to the TRAFAC class translation factor GTPase superfamily. Classic translation factor GTPase family. LepA subfamily.

It is found in the mitochondrion inner membrane. It carries out the reaction GTP + H2O = GDP + phosphate + H(+). Functionally, promotes mitochondrial protein synthesis. May act as a fidelity factor of the translation reaction, by catalyzing a one-codon backward translocation of tRNAs on improperly translocated ribosomes. Binds to mitochondrial ribosomes in a GTP-dependent manner. The sequence is that of Translation factor guf1, mitochondrial (guf1) from Neosartorya fischeri (strain ATCC 1020 / DSM 3700 / CBS 544.65 / FGSC A1164 / JCM 1740 / NRRL 181 / WB 181) (Aspergillus fischerianus).